The chain runs to 803 residues: MRVPYKWLQQYVDVTLPPAELADKLTMAGLAVEGVEDLTPGFQKVVAGKIKTITPHPDADHLVICNVDAGRELQLVTGAPNVHEGQMVAVALEGARLPGGREIHRATFRGVVSEGMLCSAQELGLDVSLVSPEDREGIITLPPDASPGADAAEVLGLKDVVLVLELTPNRADCLSILGVAREVAAITGAPIHLPATLPGEDGPEITGLATVEITAPDLCARYVARLVQGVRIGPSPAWLQAFLRAAGMRPINNVVDITNFIMLEMGQPLHAFDYDLLEGHRIIVRRAGPGEKITTLDGVERELDPEMLVIADAARPVAVAGVMGGLATEVTPATTNILIESAHFDGASIRRTSRRLGLRSEASTRFERGVNLEGAPAAADRAARLMAELAGGRVAPGRIDCYVKRRQPVTIELRPERVNYLLGTELAPTTMKELLERLHLEVRGEGPFQVTVPAYRGDLTGEIDLVEEIARLYGYNRIPVTLPGNLTAREKQAPAQRWEEAGREAAAAAGLAEVITYSFIGPRALDQLRLPEDHPWRRTVKIQNPLREEQSIMRPSLLPGLLEVAGRNASRRVLPVAIYELGRVFIPAGSRRPGEPLRLAGLVMGTTPRGWNWPAGEMDFYYLKGILESIFSRLRVRDVSWEASNAYPFLHPGRAATIKAGTRVLGYLGELHPDVLAAVELPARACAFELDWEAAGDLALRVPRYEPLPRFPAVERDLAVVVPATTPAAAVAGVIREAGGELLRAIALFDVYEGAPVPEGCKSLAYSLVYQLPDRTLTDAEVNAAQERIQRALEERLGASLRQ.

Residues 39–152 (TPGFQKVVAG…PDASPGADAA (114 aa)) enclose the tRNA-binding domain. The region spanning 406–480 (RQPVTIELRP…RLYGYNRIPV (75 aa)) is the B5 domain. The Mg(2+) site is built by Asp-458, Asp-464, Glu-467, and Glu-468. Positions 709–802 (PRFPAVERDL…LEERLGASLR (94 aa)) constitute an FDX-ACB domain.

Belongs to the phenylalanyl-tRNA synthetase beta subunit family. Type 1 subfamily. Tetramer of two alpha and two beta subunits. Mg(2+) is required as a cofactor.

It is found in the cytoplasm. It carries out the reaction tRNA(Phe) + L-phenylalanine + ATP = L-phenylalanyl-tRNA(Phe) + AMP + diphosphate + H(+). In Moorella thermoacetica (strain ATCC 39073 / JCM 9320), this protein is Phenylalanine--tRNA ligase beta subunit.